We begin with the raw amino-acid sequence, 287 residues long: Energy-coupling factor transporter ATP-binding protein EcfA2 (287 aa).

The 243-residue stretch at 3–245 (IKFENVSYVY…SEWLQKHHLA (243 aa)) folds into the ABC transporter domain. 40–47 (GHTGSGKS) is an ATP binding site.

Belongs to the ABC transporter superfamily. Energy-coupling factor EcfA family. Forms a stable energy-coupling factor (ECF) transporter complex composed of 2 membrane-embedded substrate-binding proteins (S component), 2 ATP-binding proteins (A component) and 2 transmembrane proteins (T component).

Its subcellular location is the cell membrane. Its function is as follows. ATP-binding (A) component of a common energy-coupling factor (ECF) ABC-transporter complex. Unlike classic ABC transporters this ECF transporter provides the energy necessary to transport a number of different substrates. In Lactobacillus delbrueckii subsp. bulgaricus (strain ATCC 11842 / DSM 20081 / BCRC 10696 / JCM 1002 / NBRC 13953 / NCIMB 11778 / NCTC 12712 / WDCM 00102 / Lb 14), this protein is Energy-coupling factor transporter ATP-binding protein EcfA2.